Here is a 212-residue protein sequence, read N- to C-terminus: Thymidylate kinase (212 aa).

11 to 18 (GPEGAGKT) lines the ATP pocket.

This sequence belongs to the thymidylate kinase family.

It carries out the reaction dTMP + ATP = dTDP + ADP. In terms of biological role, phosphorylation of dTMP to form dTDP in both de novo and salvage pathways of dTTP synthesis. The polypeptide is Thymidylate kinase (Streptococcus pneumoniae (strain Taiwan19F-14)).